The sequence spans 113 residues: ATP synthase epsilon chain (113 aa).

The protein belongs to the ATPase epsilon chain family. F-type ATPases have 2 components, CF(1) - the catalytic core - and CF(0) - the membrane proton channel. CF(1) has five subunits: alpha(3), beta(3), gamma(1), delta(1), epsilon(1). CF(0) has three main subunits: a, b and c.

Its subcellular location is the cell membrane. Its function is as follows. Produces ATP from ADP in the presence of a proton gradient across the membrane. The chain is ATP synthase epsilon chain from Wolbachia pipientis subsp. Culex pipiens (strain wPip).